The chain runs to 864 residues: Probable M1 family aminopeptidase 1 (864 aa).

Substrate contacts are provided by residues E149 and G289 to N293. H325 is a binding site for Zn(2+). The active-site Proton acceptor is E326. The Zn(2+) site is built by H329 and E348.

The protein belongs to the peptidase M1 family. The cofactor is Zn(2+).

The chain is Probable M1 family aminopeptidase 1 from Encephalitozoon cuniculi (strain GB-M1) (Microsporidian parasite).